The sequence spans 410 residues: Adenosylhomocysteinase (410 aa).

Substrate is bound by residues Asp-117 and Glu-142. 143 to 145 (TTT) lines the NAD(+) pocket. Lys-172 and Asp-176 together coordinate substrate. NAD(+)-binding positions include Asn-177, 206–211 (GYGYCG), Glu-229, 285–287 (AGH), and Asn-332.

It belongs to the adenosylhomocysteinase family. The cofactor is NAD(+).

Its subcellular location is the cytoplasm. It catalyses the reaction S-adenosyl-L-homocysteine + H2O = L-homocysteine + adenosine. The protein operates within amino-acid biosynthesis; L-homocysteine biosynthesis; L-homocysteine from S-adenosyl-L-homocysteine: step 1/1. Functionally, may play a key role in the regulation of the intracellular concentration of adenosylhomocysteine. The polypeptide is Adenosylhomocysteinase (Thermoplasma acidophilum (strain ATCC 25905 / DSM 1728 / JCM 9062 / NBRC 15155 / AMRC-C165)).